The primary structure comprises 670 residues: DNA ligase (670 aa).

Residues 32 to 36 (DAEYD), 81 to 82 (SL), and Glu113 contribute to the NAD(+) site. Lys115 acts as the N6-AMP-lysine intermediate in catalysis. NAD(+) contacts are provided by Arg136, Glu173, Lys290, and Lys314. Zn(2+) contacts are provided by Cys408, Cys411, Cys426, and Cys432. Residues 592–670 (EIDSPFAGKT…EAEMIRLLGE (79 aa)) enclose the BRCT domain.

Belongs to the NAD-dependent DNA ligase family. LigA subfamily. It depends on Mg(2+) as a cofactor. The cofactor is Mn(2+).

The catalysed reaction is NAD(+) + (deoxyribonucleotide)n-3'-hydroxyl + 5'-phospho-(deoxyribonucleotide)m = (deoxyribonucleotide)n+m + AMP + beta-nicotinamide D-nucleotide.. Its function is as follows. DNA ligase that catalyzes the formation of phosphodiester linkages between 5'-phosphoryl and 3'-hydroxyl groups in double-stranded DNA using NAD as a coenzyme and as the energy source for the reaction. It is essential for DNA replication and repair of damaged DNA. The polypeptide is DNA ligase (Yersinia pseudotuberculosis serotype IB (strain PB1/+)).